The sequence spans 770 residues: DNA ligase 1 (770 aa).

Positions 1 to 18 (MSTGEGTAEQTATGTPAQ) are enriched in low complexity. The interval 1–27 (MSTGEGTAEQTATGTPAQNGRESIPSD) is disordered. NAD(+)-binding positions include 57–61 (DAEFD), 106–107 (SL), and glutamate 142. Lysine 144 (N6-AMP-lysine intermediate) is an active-site residue. NAD(+) contacts are provided by arginine 165, glutamate 202, lysine 318, and lysine 342. Residues cysteine 439, cysteine 442, cysteine 458, and cysteine 464 each coordinate Zn(2+). One can recognise a BRCT domain in the interval 657-746 (STPRTLEGLT…PAAVGDAAEA (90 aa)). A disordered region spans residues 741–770 (GDAAEADGGDAPEESAALQEEKAAAVEETA). Residues 744 to 753 (AEADGGDAPE) show a composition bias toward acidic residues. Residues 759 to 770 (QEEKAAAVEETA) are compositionally biased toward basic and acidic residues.

The protein belongs to the NAD-dependent DNA ligase family. LigA subfamily. The cofactor is Mg(2+). It depends on Mn(2+) as a cofactor.

It catalyses the reaction NAD(+) + (deoxyribonucleotide)n-3'-hydroxyl + 5'-phospho-(deoxyribonucleotide)m = (deoxyribonucleotide)n+m + AMP + beta-nicotinamide D-nucleotide.. In terms of biological role, DNA ligase that catalyzes the formation of phosphodiester linkages between 5'-phosphoryl and 3'-hydroxyl groups in double-stranded DNA using NAD as a coenzyme and as the energy source for the reaction. It is essential for DNA replication and repair of damaged DNA. The chain is DNA ligase 1 from Pseudarthrobacter chlorophenolicus (strain ATCC 700700 / DSM 12829 / CIP 107037 / JCM 12360 / KCTC 9906 / NCIMB 13794 / A6) (Arthrobacter chlorophenolicus).